The chain runs to 102 residues: MFAIIELGAKQFKVSPDQVFVAEKTGNTVGSTVETKVLLLSDNNKVNIGSPALSGAKVTLKVLEDCKGEKIHGFKYKKRKNYKKSWGHRQQLQKLQVVSISG.

The protein belongs to the bacterial ribosomal protein bL21 family. In terms of assembly, part of the 50S ribosomal subunit. Contacts protein L20.

Its function is as follows. This protein binds to 23S rRNA in the presence of protein L20. The polypeptide is Large ribosomal subunit protein bL21 (Leptospira biflexa serovar Patoc (strain Patoc 1 / Ames)).